The primary structure comprises 216 residues: MPWSTLLAEEKQKPYFQQLWQRVEQARQETVVYPPKEDVFNALKLTDPENIKVVILGQDPYHGPGQAHGLSFSVPEGVKFPPSLRNMFKAIAIDYPDTVLPQHGDLTSWAEQGVLLLNTVLTVEQGNAHSHASWGWETFTDTVISKVSDATDHVVFLLWGSHAQKKIPLIDGNKHCILTAPHPSPLSAHRGFFDANHFRKTNDYLQQHGRQPIRWV.

The active-site Proton acceptor is the Asp59.

It belongs to the uracil-DNA glycosylase (UDG) superfamily. UNG family.

It is found in the cytoplasm. The enzyme catalyses Hydrolyzes single-stranded DNA or mismatched double-stranded DNA and polynucleotides, releasing free uracil.. Excises uracil residues from the DNA which can arise as a result of misincorporation of dUMP residues by DNA polymerase or due to deamination of cytosine. The sequence is that of Uracil-DNA glycosylase from Idiomarina loihiensis (strain ATCC BAA-735 / DSM 15497 / L2-TR).